Reading from the N-terminus, the 267-residue chain is B3 domain-containing protein At3g11580 (267 aa).

The segment at residues 29 to 143 (FEKSLTPSDV…RLFIGWRRRG (115 aa)) is a DNA-binding region (TF-B3).

It is found in the nucleus. The chain is B3 domain-containing protein At3g11580 (ARF32) from Arabidopsis thaliana (Mouse-ear cress).